Reading from the N-terminus, the 136-residue chain is Large ribosomal subunit protein uL16 (136 aa).

Belongs to the universal ribosomal protein uL16 family. Part of the 50S ribosomal subunit.

In terms of biological role, binds 23S rRNA and is also seen to make contacts with the A and possibly P site tRNAs. In Sodalis glossinidius (strain morsitans), this protein is Large ribosomal subunit protein uL16.